The chain runs to 261 residues: Hemin import ATP-binding protein HmuV (261 aa).

The ABC transporter domain occupies 2 to 243 (LCANNVSAQI…ALLKRVYNIN (242 aa)). Residue 34–41 (GPNGAGKS) coordinates ATP.

It belongs to the ABC transporter superfamily. Heme (hemin) importer (TC 3.A.1.14.5) family. In terms of assembly, the complex is composed of two ATP-binding proteins (HmuV), two transmembrane proteins (HmuU) and a solute-binding protein (HmuT).

The protein localises to the cell inner membrane. Its function is as follows. Part of the ABC transporter complex HmuTUV involved in hemin import. Responsible for energy coupling to the transport system. This Pseudoalteromonas translucida (strain TAC 125) protein is Hemin import ATP-binding protein HmuV.